Consider the following 282-residue polypeptide: Bifunctional protein FolD (282 aa).

NADP(+)-binding positions include 164–166 (GAS), Ile-189, and Ile-230.

Belongs to the tetrahydrofolate dehydrogenase/cyclohydrolase family. Homodimer.

The enzyme catalyses (6R)-5,10-methylene-5,6,7,8-tetrahydrofolate + NADP(+) = (6R)-5,10-methenyltetrahydrofolate + NADPH. The catalysed reaction is (6R)-5,10-methenyltetrahydrofolate + H2O = (6R)-10-formyltetrahydrofolate + H(+). It functions in the pathway one-carbon metabolism; tetrahydrofolate interconversion. Catalyzes the oxidation of 5,10-methylenetetrahydrofolate to 5,10-methenyltetrahydrofolate and then the hydrolysis of 5,10-methenyltetrahydrofolate to 10-formyltetrahydrofolate. This Campylobacter jejuni subsp. jejuni serotype O:6 (strain 81116 / NCTC 11828) protein is Bifunctional protein FolD.